Reading from the N-terminus, the 264-residue chain is MIQYQDLLERILSDGAEKHDRTGTGTLSVFGHQMRFDLAAGFPMLTTKRLPLKAIVHELLWFLQGDTNIKYLHDHGVTIWDEWADANGDLGPVYGAQWRSWPTADGGSIDQIANVVEMIKRNPDSRRLMVTAWNPADVEKMALPPCHCLFQFYVANGKLSCQLYQRSADVFLGVPFNIASYALLTLMVAQVTGLKPGEFVHTLGDAHLYSNHLEQARLQLTRAPRALPVMTINPAVKDIFGFRYEDFTLTGYDPHPHIKAEVAV.

DUMP-binding positions include Arg21 and 126 to 127 (RR). The active-site Nucleophile is the Cys146. Residues 166–169 (RSAD), Asn177, and 207–209 (HLY) each bind dUMP. Residue Asp169 coordinates (6R)-5,10-methylene-5,6,7,8-tetrahydrofolate. Ala263 provides a ligand contact to (6R)-5,10-methylene-5,6,7,8-tetrahydrofolate.

It belongs to the thymidylate synthase family. Bacterial-type ThyA subfamily. In terms of assembly, homodimer.

The protein localises to the cytoplasm. It carries out the reaction dUMP + (6R)-5,10-methylene-5,6,7,8-tetrahydrofolate = 7,8-dihydrofolate + dTMP. The protein operates within pyrimidine metabolism; dTTP biosynthesis. Functionally, catalyzes the reductive methylation of 2'-deoxyuridine-5'-monophosphate (dUMP) to 2'-deoxythymidine-5'-monophosphate (dTMP) while utilizing 5,10-methylenetetrahydrofolate (mTHF) as the methyl donor and reductant in the reaction, yielding dihydrofolate (DHF) as a by-product. This enzymatic reaction provides an intracellular de novo source of dTMP, an essential precursor for DNA biosynthesis. The polypeptide is Thymidylate synthase (Rhodopseudomonas palustris (strain ATCC BAA-98 / CGA009)).